The primary structure comprises 299 residues: Probable lipid kinase YegS (299 aa).

Residues 2 to 133 (ANFPASLLIL…IDMAMVNDKT (132 aa)) enclose the DAGKc domain. Residues Thr40, 66–72 (GDGTINE), and Thr95 contribute to the ATP site. Leu215, Asp218, and Leu220 together coordinate Mg(2+). Glu271 (proton acceptor) is an active-site residue.

It belongs to the diacylglycerol/lipid kinase family. YegS lipid kinase subfamily. The cofactor is Mg(2+). It depends on Ca(2+) as a cofactor.

Its subcellular location is the cytoplasm. Its function is as follows. Probably phosphorylates lipids; the in vivo substrate is unknown. The polypeptide is Probable lipid kinase YegS (Salmonella choleraesuis (strain SC-B67)).